Here is a 453-residue protein sequence, read N- to C-terminus: Chromosomal replication initiator protein DnaA (453 aa).

Residues 1–73 form a domain I, interacts with DnaA modulators region; sequence MELSPQDLWT…ADVVEEILGY (73 aa). Positions 73–110 are domain II; sequence YSIDIQLTSTQGENIAIVGETQVSAYYPTLSGEHPKPI. The domain III, AAA+ region stretch occupies residues 111–327; the sequence is KLNPKYTFSR…GALIRAITYI (217 aa). 4 residues coordinate ATP: glycine 155, glycine 157, lysine 158, and threonine 159. Residues 328 to 453 form a domain IV, binds dsDNA region; it reads SISGLSMTVE…HLASRTQKTT (126 aa).

This sequence belongs to the DnaA family. As to quaternary structure, oligomerizes as a right-handed, spiral filament on DNA at oriC.

It is found in the cytoplasm. Plays an essential role in the initiation and regulation of chromosomal replication. ATP-DnaA binds to the origin of replication (oriC) to initiate formation of the DNA replication initiation complex once per cell cycle. Binds the DnaA box (a 9 base pair repeat at the origin) and separates the double-stranded (ds)DNA. Forms a right-handed helical filament on oriC DNA; dsDNA binds to the exterior of the filament while single-stranded (ss)DNA is stabiized in the filament's interior. The ATP-DnaA-oriC complex binds and stabilizes one strand of the AT-rich DNA unwinding element (DUE), permitting loading of DNA polymerase. After initiation quickly degrades to an ADP-DnaA complex that is not apt for DNA replication. Binds acidic phospholipids. This is Chromosomal replication initiator protein DnaA from Gloeothece citriformis (strain PCC 7424) (Cyanothece sp. (strain PCC 7424)).